An 85-amino-acid chain; its full sequence is Large ribosomal subunit protein eL34 (85 aa).

It belongs to the eukaryotic ribosomal protein eL34 family.

The sequence is that of Large ribosomal subunit protein eL34 from Saccharolobus islandicus (strain M.16.27) (Sulfolobus islandicus).